Reading from the N-terminus, the 88-residue chain is Small ribosomal subunit protein uS17 (88 aa).

This sequence belongs to the universal ribosomal protein uS17 family. In terms of assembly, part of the 30S ribosomal subunit.

Functionally, one of the primary rRNA binding proteins, it binds specifically to the 5'-end of 16S ribosomal RNA. This Brevibacillus brevis (strain 47 / JCM 6285 / NBRC 100599) protein is Small ribosomal subunit protein uS17.